A 95-amino-acid polypeptide reads, in one-letter code: MLKPLGNRVIIQKSEQEQTTKSGIVLTDSAKEKSNEGTIIAVGAGRILKDGSRVAPEVNEGDKVVFQQYAGTEVKRGDETYLIVNEEDILAIIES.

Belongs to the GroES chaperonin family. In terms of assembly, heptamer of 7 subunits arranged in a ring. Interacts with the chaperonin GroEL.

The protein resides in the cytoplasm. Its function is as follows. Together with the chaperonin GroEL, plays an essential role in assisting protein folding. The GroEL-GroES system forms a nano-cage that allows encapsulation of the non-native substrate proteins and provides a physical environment optimized to promote and accelerate protein folding. GroES binds to the apical surface of the GroEL ring, thereby capping the opening of the GroEL channel. The polypeptide is Co-chaperonin GroES (Staphylococcus saprophyticus subsp. saprophyticus (strain ATCC 15305 / DSM 20229 / NCIMB 8711 / NCTC 7292 / S-41)).